The following is a 386-amino-acid chain: Succinyl-diaminopimelate desuccinylase (386 aa).

Position 77 (His-77) interacts with Zn(2+). Residue Asp-79 is part of the active site. Asp-110 lines the Zn(2+) pocket. Glu-144 serves as the catalytic Proton acceptor. 3 residues coordinate Zn(2+): Glu-145, Glu-173, and His-359.

The protein belongs to the peptidase M20A family. DapE subfamily. In terms of assembly, homodimer. Requires Zn(2+) as cofactor. The cofactor is Co(2+).

The catalysed reaction is N-succinyl-(2S,6S)-2,6-diaminopimelate + H2O = (2S,6S)-2,6-diaminopimelate + succinate. It participates in amino-acid biosynthesis; L-lysine biosynthesis via DAP pathway; LL-2,6-diaminopimelate from (S)-tetrahydrodipicolinate (succinylase route): step 3/3. In terms of biological role, catalyzes the hydrolysis of N-succinyl-L,L-diaminopimelic acid (SDAP), forming succinate and LL-2,6-diaminopimelate (DAP), an intermediate involved in the bacterial biosynthesis of lysine and meso-diaminopimelic acid, an essential component of bacterial cell walls. The polypeptide is Succinyl-diaminopimelate desuccinylase (Methylibium petroleiphilum (strain ATCC BAA-1232 / LMG 22953 / PM1)).